The chain runs to 401 residues: Adenosine 3'-phospho 5'-phosphosulfate transporter 2 (401 aa).

2 N-linked (GlcNAc...) asparagine glycosylation sites follow: asparagine 12 and asparagine 71. Transmembrane regions (helical) follow at residues 78 to 98 (LTQF…YGYL), 114 to 134 (YLTL…LQLI), 147 to 167 (MIIA…LGYL), 170 to 190 (PTQV…GVFI), 196 to 216 (NVAD…FTLA), and 223 to 243 (NFNL…AVIG). Asparagine 254 carries N-linked (GlcNAc...) asparagine glycosylation. A run of 4 helical transmembrane segments spans residues 267–287 (IGFV…PAVT), 298–317 (GYAF…VLAL), 324–346 (LIAV…IFFA), and 349–369 (FTFQ…LNVY).

The protein belongs to the nucleotide-sugar transporter family. SLC35B subfamily. Preferentially and highly expressed in colon.

The protein resides in the golgi apparatus membrane. It catalyses the reaction 3'-phosphoadenylyl sulfate(in) + adenosine 3',5'-bisphosphate(out) = 3'-phosphoadenylyl sulfate(out) + adenosine 3',5'-bisphosphate(in). Its function is as follows. Probably functions as a 3'-phosphoadenylyl sulfate:adenosine 3',5'-bisphosphate antiporter at the Golgi membranes. Mediates the transport from the cytosol into the lumen of the Golgi of 3'-phosphoadenylyl sulfate/adenosine 3'-phospho 5'-phosphosulfate (PAPS), a universal sulfuryl donor for sulfation events that take place in that compartment. The protein is Adenosine 3'-phospho 5'-phosphosulfate transporter 2 of Homo sapiens (Human).